Reading from the N-terminus, the 516-residue chain is GMP synthase [glutamine-hydrolyzing] (516 aa).

The Glutamine amidotransferase type-1 domain maps to 8–198 (KILILDFGSQ…VVNICGCDTL (191 aa)). C84 acts as the Nucleophile in catalysis. Residues H172 and E174 contribute to the active site. Positions 199-391 (WNIENIIEND…LGLPYNMLYR (193 aa)) constitute a GMPS ATP-PPase domain. 226 to 232 (SGGVDSS) serves as a coordination point for ATP.

In terms of assembly, homodimer.

The enzyme catalyses XMP + L-glutamine + ATP + H2O = GMP + L-glutamate + AMP + diphosphate + 2 H(+). The protein operates within purine metabolism; GMP biosynthesis; GMP from XMP (L-Gln route): step 1/1. Catalyzes the synthesis of GMP from XMP. In Francisella tularensis subsp. mediasiatica (strain FSC147), this protein is GMP synthase [glutamine-hydrolyzing].